The chain runs to 101 residues: Small ribosomal subunit protein uS10 (101 aa).

Belongs to the universal ribosomal protein uS10 family. In terms of assembly, part of the 30S ribosomal subunit.

In terms of biological role, involved in the binding of tRNA to the ribosomes. The chain is Small ribosomal subunit protein uS10 from Anaeromyxobacter dehalogenans (strain 2CP-C).